A 119-amino-acid polypeptide reads, in one-letter code: Small ribosomal subunit protein bS16 (119 aa).

The tract at residues 81–119 (GLAKRPARNNPKKAEPGQKAKERAAARAEKAGAGDDAAA) is disordered. Residues 92–113 (KKAEPGQKAKERAAARAEKAGA) show a composition bias toward basic and acidic residues.

The protein belongs to the bacterial ribosomal protein bS16 family.

This chain is Small ribosomal subunit protein bS16, found in Methylobacterium sp. (strain 4-46).